Reading from the N-terminus, the 537-residue chain is Aminopeptidase Y (537 aa).

Positions 1–21 (MHFSLKQLAVAAFYATNLGSA) are cleaved as a signal peptide. A propeptide spanning residues 22–56 (YVIPQFFQEAFQQEEPIENYLPQLNDDDSSAVAAN) is cleaved from the precursor. N-linked (GlcNAc...) asparagine glycosylation is found at asparagine 85, asparagine 96, asparagine 115, asparagine 150, and asparagine 162. The Zn(2+) site is built by histidine 314 and aspartate 326. The active-site Proton acceptor is glutamate 358. Glutamate 359 lines the Zn(2+) pocket. An N-linked (GlcNAc...) asparagine glycan is attached at asparagine 371. Aspartate 387 contacts Zn(2+). The N-linked (GlcNAc...) asparagine glycan is linked to asparagine 427. Residue histidine 472 coordinates Zn(2+). The N-linked (GlcNAc...) asparagine glycan is linked to asparagine 480.

Belongs to the peptidase M28 family. M28A subfamily. Monomer. Zn(2+) serves as cofactor.

It is found in the vacuole. It catalyses the reaction Preferentially, release of N-terminal lysine.. This chain is Aminopeptidase Y (APE3), found in Saccharomyces cerevisiae (strain ATCC 204508 / S288c) (Baker's yeast).